The primary structure comprises 448 residues: Histidinol dehydrogenase (448 aa).

Positions 136, 197, and 220 each coordinate NAD(+). Residues Ser-243, Gln-265, and His-268 each contribute to the substrate site. Zn(2+) is bound by residues Gln-265 and His-268. Catalysis depends on proton acceptor residues Glu-333 and His-334. Substrate-binding residues include His-334, Asp-367, Glu-421, and His-426. A Zn(2+)-binding site is contributed by Asp-367. Zn(2+) is bound at residue His-426.

It belongs to the histidinol dehydrogenase family. It depends on Zn(2+) as a cofactor.

The enzyme catalyses L-histidinol + 2 NAD(+) + H2O = L-histidine + 2 NADH + 3 H(+). It participates in amino-acid biosynthesis; L-histidine biosynthesis; L-histidine from 5-phospho-alpha-D-ribose 1-diphosphate: step 9/9. In terms of biological role, catalyzes the sequential NAD-dependent oxidations of L-histidinol to L-histidinaldehyde and then to L-histidine. This chain is Histidinol dehydrogenase, found in Pseudomonas savastanoi pv. phaseolicola (strain 1448A / Race 6) (Pseudomonas syringae pv. phaseolicola (strain 1448A / Race 6)).